Here is a 435-residue protein sequence, read N- to C-terminus: MSQKPHLNLIVIGHIDHGKSTLVGRLLMDRGFIDEKTVKEAEEAAKKLGKESEKFAFLLDRLKEERERGVTINLTFMRFETKKYFFTIIDAPGHRDFVKNMITGASQADAAILVVSAKKGEYEAGMSVEGQTREHIILAKTMGLDQLIVAVNKMDLTEPPYDEKRYKEIVDQVSKFMRSYGFNTNKVRFVPVVAPAGDNITHRSENMKWYNGPTLEEYLDQLELPPKPVDKPLRIPIQDVYSISGVGTVPVGRVESGVLKVGDKIVFMPAGKVGEVRSIETHHTKMDKAEPGDNIGFNVRGVEKKDIKRGDVVGHPNNPPTVADEFTARIIVVWHPTALANGYTPVIHVHTASVACRVSELVSKLDPRTGQEAEKNPQFLKQGDVAIVKFKPIKPLCVEKYNEFPPLGRFAMRDMGKTVGVGIIVDVKPAKVEIK.

Residues 4–227 (KPHLNLIVIG…YLDQLELPPK (224 aa)) enclose the tr-type G domain. Positions 13–20 (GHIDHGKS) are G1. A GTP-binding site is contributed by 13-20 (GHIDHGKS). Position 20 (S20) interacts with Mg(2+). Residues 69 to 73 (GVTIN) form a G2 region. Residues 90–93 (DAPG) are G3. GTP is bound by residues 90–94 (DAPGH) and 152–155 (NKMD). Residues 152–155 (NKMD) form a G4 region. The interval 193–195 (VAP) is G5.

This sequence belongs to the TRAFAC class translation factor GTPase superfamily. Classic translation factor GTPase family. EF-Tu/EF-1A subfamily.

Its subcellular location is the cytoplasm. The enzyme catalyses GTP + H2O = GDP + phosphate + H(+). In terms of biological role, GTP hydrolase that promotes the GTP-dependent binding of aminoacyl-tRNA to the A-site of ribosomes during protein biosynthesis. The sequence is that of Elongation factor 1-alpha from Saccharolobus solfataricus (strain ATCC 35092 / DSM 1617 / JCM 11322 / P2) (Sulfolobus solfataricus).